The sequence spans 329 residues: Replication factor C small subunit 1 (329 aa).

ATP is bound at residue 44 to 51; sequence GPPGTGKT.

Belongs to the activator 1 small subunits family. RfcS subfamily. Heteromultimer composed of small subunits (RfcS) and large subunits (RfcL).

Its function is as follows. Part of the RFC clamp loader complex which loads the PCNA sliding clamp onto DNA. In Pyrobaculum arsenaticum (strain DSM 13514 / JCM 11321 / PZ6), this protein is Replication factor C small subunit 1.